The chain runs to 706 residues: uncharacterized protein (706 aa).

Coiled-coil stretches lie at residues 86–162, 269–299, and 337–427; these read TKNV…AKKI, DYLK…VNEL, and DDYI…QSDY.

This is an uncharacterized protein from Staphylococcus aureus (strain MRSA252).